The primary structure comprises 140 residues: Nucleoside diphosphate kinase (140 aa).

ATP is bound by residues lysine 11, phenylalanine 59, arginine 87, threonine 93, arginine 104, and asparagine 114. The active-site Pros-phosphohistidine intermediate is the histidine 117.

This sequence belongs to the NDK family. In terms of assembly, homotetramer. Mg(2+) is required as a cofactor.

The protein resides in the cytoplasm. The catalysed reaction is a 2'-deoxyribonucleoside 5'-diphosphate + ATP = a 2'-deoxyribonucleoside 5'-triphosphate + ADP. The enzyme catalyses a ribonucleoside 5'-diphosphate + ATP = a ribonucleoside 5'-triphosphate + ADP. Its function is as follows. Major role in the synthesis of nucleoside triphosphates other than ATP. The ATP gamma phosphate is transferred to the NDP beta phosphate via a ping-pong mechanism, using a phosphorylated active-site intermediate. The protein is Nucleoside diphosphate kinase of Brucella anthropi (strain ATCC 49188 / DSM 6882 / CCUG 24695 / JCM 21032 / LMG 3331 / NBRC 15819 / NCTC 12168 / Alc 37) (Ochrobactrum anthropi).